The primary structure comprises 1715 residues: Neurexin-2 (1715 aa).

Residues 1 to 29 (MALGSRWRPPPQLPPLLLLLALVAGVRGL) form the signal peptide. A Laminin G-like 1 domain is found at 30-206 (EFGGGPGQWA…LRGAAADPLC (177 aa)). The Extracellular segment spans residues 30–1639 (EFGGGPGQWA…EVIRESSSTT (1610 aa)). N60 carries an N-linked (GlcNAc...) asparagine glycan. The EGF-like 1 domain occupies 202 to 242 (ADPLCAPARNPCANGGLCTVLAPGEVGCDCSHTGFGGKFCS). Cystine bridges form between C206–C219, C213–C229, and C231–C241. Laminin G-like domains follow at residues 289–486 (VATF…SFRC) and 493–686 (DPVT…APFC). D335 contributes to the Ca(2+) binding site. Residue N338 is glycosylated (N-linked (GlcNAc...) asparagine). Residues L352 and M420 each coordinate Ca(2+). 5 cysteine pairs are disulfide-bonded: C450/C486, C657/C686, C694/C705, C699/C714, and C716/C726. One can recognise an EGF-like 2 domain in the interval 690-727 (TLKQCASAPCRNGGICREGWNRFVCDCIGTGFLGRVCE). 2 Laminin G-like domains span residues 732–907 (VLSY…ITYC) and 921–1096 (DPVT…ERGC). Ca(2+) contacts are provided by D779 and L796. An N-linked (GlcNAc...) asparagine glycan is attached at N844. Position 857 (R857) interacts with Ca(2+). Cystine bridges form between C1068/C1096, C1103/C1114, C1108/C1123, and C1125/C1135. The region spanning 1099 to 1136 (PSTTCTEESCANQGVCLQQWDGFTCDCTMTSYGGPVCN) is the EGF-like 3 domain. One can recognise a Laminin G-like 6 domain in the interval 1140 to 1348 (TTYIFGKGGA…HLRLVGEGPS (209 aa)). Positions 1192 and 1209 each coordinate Ca(2+). An N-linked (GlcNAc...) asparagine glycan is attached at N1239. Ca(2+)-binding residues include I1291 and N1293. An O-linked (Xyl...) (heparan sulfate) serine glycan is attached at S1403. Disordered regions lie at residues 1461 to 1511 (ATQD…LPPT), 1529 to 1549 (LLSP…ATGA), and 1583 to 1626 (LGPG…RGPP). The helical transmembrane segment at 1640–1660 (GMVVGIVAAAALCILILLYAM) threads the bilayer. Residues 1661–1715 (YKYRNRDEGSYQVDQSRNYISNSAQSNGAVVKEKAPAAPKTPSKAKKNKDKEYYV) are Cytoplasmic-facing. The segment at 1682-1715 (NSAQSNGAVVKEKAPAAPKTPSKAKKNKDKEYYV) is disordered.

Belongs to the neurexin family. The laminin G-like domain 1 binds to NXPH1. Interacts with PATJ. Interacts with CBLN1, CBLN2 and, less avidly, with CBLN4. Specific isoforms bind neuroligins NLGN1, NLGN2 and NLGN3. Isoform 5c/alpha-2C binds to alpha-dystroglycan. Interacts (via Laminin G-like 1 domain) with IGSF21 (Ig-like 1 domain) in a trans-interaction manner. Interacts with CLSTN3. O-glycosylated; contains heparan sulfate. Heparan sulfate attachment is required for synapse development by mediating interactions with neuroligins. Brain (neuronal synapse).

The protein resides in the presynaptic cell membrane. Neuronal cell surface protein that may be involved in cell recognition and cell adhesion. May mediate intracellular signaling. The sequence is that of Neurexin-2 (Nrxn2) from Rattus norvegicus (Rat).